Reading from the N-terminus, the 669-residue chain is Histone-lysine N-methyltransferase, H3 lysine-9 specific SUVH3 (669 aa).

Disordered regions lie at residues Tyr56–Thr127 and Glu270–Gln290. Polar residues-rich tracts occupy residues Gln65–Ile82 and Arg93–Thr107. The a.T hook DNA-binding region spans Lys108–Val120. Positions Gly208–Arg355 constitute a YDG domain. One can recognise a Pre-SET domain in the interval Ile430–Gly491. Zn(2+) is bound by residues Cys432, Cys434, Cys438, Cys445, Cys447, Cys473, Cys477, Cys479, and Cys483. The SET domain occupies Ser494–Gly638. S-adenosyl-L-methionine-binding positions include Arg504–Trp506, Asp540, Tyr542, Arg592, and Asn595–His596. Zn(2+) contacts are provided by Cys598, Cys657, Cys659, and Cys664. A Post-SET domain is found at Gly653–Gly669.

The protein belongs to the class V-like SAM-binding methyltransferase superfamily. Histone-lysine methyltransferase family. Suvar3-9 subfamily. In terms of tissue distribution, expressed in leaves stems and flowers.

It is found in the nucleus. Its subcellular location is the chromosome. The protein localises to the centromere. It carries out the reaction L-lysyl(9)-[histone H3] + S-adenosyl-L-methionine = N(6)-methyl-L-lysyl(9)-[histone H3] + S-adenosyl-L-homocysteine + H(+). In terms of biological role, histone methyltransferase. Methylates 'Lys-9' of histone H3. H3 'Lys-9' methylation represents a specific tag for epigenetic transcriptional repression. In Arabidopsis thaliana (Mouse-ear cress), this protein is Histone-lysine N-methyltransferase, H3 lysine-9 specific SUVH3 (SUVH3).